Here is a 1054-residue protein sequence, read N- to C-terminus: Desmoglein-1 (1054 aa).

The first 23 residues, 1–23 (MNWHFLRTATVLLIFLVVVEINS), serve as a signal peptide directing secretion. A propeptide spanning residues 24–49 (EFRIQVRDYNTKNGTIKWHSIRRQKR) is cleaved from the precursor. N-linked (GlcNAc...) asparagine glycosylation is found at N36, N110, and N180. Cadherin domains are found at residues 50–157 (EWIK…PPVF), 158–269 (SMST…IPYM), 270–389 (EPSS…RPGS), and 386–493 (RPGS…KDSE). Residues 50–566 (EWIKFAAACR…NLSDNVHFGP (517 aa)) are Extracellular-facing. Positions 487–554 (GWEKDSEKVT…QSNNNHQELG (68 aa)) are disordered. The span at 496 to 507 (TSSQNSGSSTGD) shows a compositional bias: low complexity. A compositionally biased stretch (gly residues) spans 508-517 (SSGGTGGGGR). The span at 523-534 (GDTTTNTGGKTS) shows a compositional bias: low complexity. The segment covering 542 to 554 (TQTQSNNNHQELG) has biased composition (polar residues). N557 carries an N-linked (GlcNAc...) asparagine glycan. A helical membrane pass occupies residues 567-587 (AGIGLLIMGFLVLGLVPFLLM). Residues 588–1054 (CCDCGGAPGA…TKYSTVQYTK (467 aa)) lie on the Cytoplasmic side of the membrane. 5 Desmoglein repeat repeats span residues 830-856 (TYPS…TVTE), 857-886 (SYTT…ERVV), 887-916 (GPIS…ERVI), 917-944 (APSS…ERVI), and 945-973 (RPAS…ERVV). Positions 1018–1040 (GHVRSSSDHHFSQTLGSASPSTA) are disordered. Over residues 1029-1040 (SQTLGSASPSTA) the composition is skewed to polar residues.

Binds to JUP/plakoglobin. Interacts with PKP2. Interacts with DSC3; there is evidence to suggest that the interaction promotes cell-cell adhesion of keratinocytes.

It localises to the cell membrane. The protein localises to the cell junction. Its subcellular location is the desmosome. The protein resides in the cytoplasm. It is found in the nucleus. Component of intercellular desmosome junctions. Involved in the interaction of plaque proteins and intermediate filaments mediating cell-cell adhesion. This Canis lupus familiaris (Dog) protein is Desmoglein-1 (DSG1).